A 162-amino-acid polypeptide reads, in one-letter code: Inorganic pyrophosphatase (162 aa).

Glutamate 8 provides a ligand contact to Mg(2+). Positions 16, 30, and 42 each coordinate substrate. Residues aspartate 52, aspartate 57, aspartate 84, and aspartate 89 each contribute to the Mg(2+) site. Aspartate 89 acts as the Proton acceptor in catalysis. Residue tyrosine 126 coordinates substrate.

This sequence belongs to the PPase family. As to quaternary structure, homohexamer. Mg(2+) serves as cofactor.

It is found in the cytoplasm. The enzyme catalyses diphosphate + H2O = 2 phosphate + H(+). Catalyzes the hydrolysis of inorganic pyrophosphate (PPi) forming two phosphate ions. The protein is Inorganic pyrophosphatase of Mycobacterium bovis (strain ATCC BAA-935 / AF2122/97).